A 205-amino-acid polypeptide reads, in one-letter code: Urease accessory protein UreG (205 aa).

14-21 (GPVGSGKT) is a binding site for GTP.

Belongs to the SIMIBI class G3E GTPase family. UreG subfamily. In terms of assembly, homodimer. UreD, UreF and UreG form a complex that acts as a GTP-hydrolysis-dependent molecular chaperone, activating the urease apoprotein by helping to assemble the nickel containing metallocenter of UreC. The UreE protein probably delivers the nickel.

It localises to the cytoplasm. Its function is as follows. Facilitates the functional incorporation of the urease nickel metallocenter. This process requires GTP hydrolysis, probably effectuated by UreG. This is Urease accessory protein UreG from Enterobacter sp. (strain 638).